Here is a 383-residue protein sequence, read N- to C-terminus: Probable L-tyrosine/L-aspartate decarboxylase (383 aa).

Lys-227 bears the N6-(pyridoxal phosphate)lysine mark.

The protein belongs to the group II decarboxylase family. MfnA subfamily. The cofactor is pyridoxal 5'-phosphate.

The enzyme catalyses L-tyrosine + H(+) = tyramine + CO2. It carries out the reaction L-aspartate + H(+) = beta-alanine + CO2. It functions in the pathway cofactor biosynthesis; methanofuran biosynthesis. The protein operates within cofactor biosynthesis; coenzyme A biosynthesis. Functionally, catalyzes the decarboxylation of L-tyrosine to produce tyramine for methanofuran biosynthesis. Can also catalyze the decarboxylation of L-aspartate to produce beta-alanine for coenzyme A (CoA) biosynthesis. The protein is Probable L-tyrosine/L-aspartate decarboxylase of Methanothrix thermoacetophila (strain DSM 6194 / JCM 14653 / NBRC 101360 / PT) (Methanosaeta thermophila).